The primary structure comprises 471 residues: ATP synthase subunit beta (471 aa).

Residue glycine 153–threonine 160 participates in ATP binding.

Belongs to the ATPase alpha/beta chains family. As to quaternary structure, F-type ATPases have 2 components, CF(1) - the catalytic core - and CF(0) - the membrane proton channel. CF(1) has five subunits: alpha(3), beta(3), gamma(1), delta(1), epsilon(1). CF(0) has four main subunits: a(1), b(1), b'(1) and c(9-12).

Its subcellular location is the cell membrane. It catalyses the reaction ATP + H2O + 4 H(+)(in) = ADP + phosphate + 5 H(+)(out). Produces ATP from ADP in the presence of a proton gradient across the membrane. The catalytic sites are hosted primarily by the beta subunits. The polypeptide is ATP synthase subunit beta (Roseiflexus castenholzii (strain DSM 13941 / HLO8)).